The chain runs to 449 residues: Protein tweety homolog 1 (449 aa).

The Extracellular segment spans residues 1–43 (MSSSHGYRASWWTYILHQVPHTNFQFEVVDNQFAPQEWPYQQA). Residues 44–64 (LLFLASIAGLCLAISLILICV) form a helical membrane-spanning segment. At 65–86 (YLIRFCCCSSQEDDDSKSHRVC) the chain is on the cytoplasmic side. Residues 87–107 (CVTWSCVAAVIICCAGIGIGF) form a helical membrane-spanning segment. The Extracellular portion of the chain corresponds to 108-212 (YGNSETNDGV…QVNFIEDYRW (105 aa)). Asn-128 carries N-linked (GlcNAc...) asparagine glycosylation. A helical transmembrane segment spans residues 213 to 233 (LAYILLLLLDLIICLFTLLGL). The Cytoplasmic portion of the chain corresponds to 234 to 238 (AKQIK). A helical membrane pass occupies residues 239-259 (WLVIVMTVVSFFVLLLSWGSM). The Extracellular portion of the chain corresponds to 260–388 (GLEMATAVGL…LKGLCYDGME (129 aa)). Cystine bridges form between Cys-273–Cys-383 and Cys-301–Cys-368. Asn-282 and Asn-353 each carry an N-linked (GlcNAc...) asparagine glycan. Residues 389-409 (GILFLLLFSFLSALSFTAAIC) form a helical membrane-spanning segment. The Cytoplasmic portion of the chain corresponds to 410–449 (SLPRAWKRFQNRDLDYDDMDEDDPFNPQESKRFVQWQSSI).

The protein belongs to the tweety family. In terms of assembly, homotetramer; disulfide-linked. Homodimer.

Its subcellular location is the cell membrane. The enzyme catalyses chloride(in) = chloride(out). It catalyses the reaction L-glutamate(out) = L-glutamate(in). In terms of biological role, may act as a calcium-independent, swelling-dependent volume-regulated anion channel (VRAC-swell) which plays a pivotal role in the process of regulatory volume decrease (RVD) in the brain through the efflux of anions like chloride and organic osmolytes like glutamate. This chain is Protein tweety homolog 1 (ttyh1), found in Xenopus tropicalis (Western clawed frog).